The sequence spans 596 residues: tRNA(Met) cytidine acetyltransferase TmcA (596 aa).

Residues Gln-138, Gly-160 to Lys-169, and Arg-285 each bind ATP. The region spanning Ser-328–Tyr-481 is the N-acetyltransferase domain. Acetyl-CoA-binding positions include Ile-406–Val-408 and Gln-413–Lys-419.

It belongs to the RNA cytidine acetyltransferase family. TmcA subfamily.

Its subcellular location is the cytoplasm. It catalyses the reaction cytidine(34) in elongator tRNA(Met) + acetyl-CoA + ATP + H2O = N(4)-acetylcytidine(34) in elongator tRNA(Met) + ADP + phosphate + CoA + H(+). Catalyzes the formation of N(4)-acetylcytidine (ac(4)C) at the wobble position of tRNA(Met), by using acetyl-CoA as an acetyl donor and ATP (or GTP). The chain is tRNA(Met) cytidine acetyltransferase TmcA from Actinobacillus pleuropneumoniae serotype 5b (strain L20).